The sequence spans 126 residues: Large ribosomal subunit protein bL17 (126 aa).

This sequence belongs to the bacterial ribosomal protein bL17 family. Part of the 50S ribosomal subunit. Contacts protein L32.

The protein is Large ribosomal subunit protein bL17 of Magnetococcus marinus (strain ATCC BAA-1437 / JCM 17883 / MC-1).